The primary structure comprises 513 residues: Protein disulfide-isomerase (513 aa).

The N-terminal stretch at 1 to 23 (MAIRSKAWISLLLALAVALSARA) is a signal peptide. One can recognise a Thioredoxin 1 domain in the interval 24–145 (EEEPAAAAEG…IVDYLKKQVG (122 aa)). Catalysis depends on nucleophile residues Cys63 and Cys66. Cysteines 63 and 66 form a disulfide. N-linked (GlcNAc...) asparagine glycosylation is present at Asn279. Residues 366 to 485 (FRNSEPIPEV…IVDFIKKSKE (120 aa)) form the Thioredoxin 2 domain. Catalysis depends on nucleophile residues Cys408 and Cys411. The cysteines at positions 408 and 411 are disulfide-linked. Positions 485–513 (ETAAPHHHHHPGATGIREGSRAEPVKDEL) are disordered. The segment covering 502–513 (EGSRAEPVKDEL) has biased composition (basic and acidic residues). The short motif at 510–513 (KDEL) is the Prevents secretion from ER element.

This sequence belongs to the protein disulfide isomerase family.

It is found in the endoplasmic reticulum lumen. The enzyme catalyses Catalyzes the rearrangement of -S-S- bonds in proteins.. In terms of biological role, participates in the folding of proteins containing disulfide bonds, may be involved in glycosylation, prolyl hydroxylation and triglyceride transfer. The chain is Protein disulfide-isomerase (PDI) from Zea mays (Maize).